The sequence spans 581 residues: Protein FAM83D (581 aa).

Residues 1-297 are DUF1669; sequence MALRYDGLDE…LYAQSKPISS (297 aa). The interval 75 to 101 is disordered; sequence PGEEGAAAGAEDSFGSSHDCSSGTYFP. Residues 88–98 show a composition bias toward polar residues; sequence FGSSHDCSSGT. Ser296 carries the phosphoserine modification. The tract at residues 338-581 is required for interaction with KIF22 and function in chromosome congression; sequence TPRKVELGGE…REIMLYPSYQ (244 aa). Disordered stretches follow at residues 366-401 and 426-503; these read EDYF…MSDV and QTVV…GPPK. Residues 369–382 are compositionally biased toward basic and acidic residues; it reads FSSRKDRLEGRRVT. Residues 426 to 438 show a composition bias toward low complexity; that stretch reads QTVVPTTSATTQT. Residue Ser456 is modified to Phosphoserine. Over residues 462 to 488 the composition is skewed to low complexity; it reads SVSRSSSLRSSSSLSSQGSVASSIGSQ. Thr507 carries the post-translational modification Phosphothreonine.

This sequence belongs to the FAM83 family. Interacts with FBXW7; promotes FBXW7 degradation. May interact with RAF1. Interacts with KIF22; recruits KIF22 to mitotic spindle microtubules. Interacts (via C-terminus) with DYNLL1. Interacts with HMMR. Directly interacts (via DUF1669) with CSNK1A1 and CSNK1A1L. In terms of processing, phosphorylated during mitosis.

The protein localises to the cytoplasm. It localises to the cytoskeleton. The protein resides in the spindle. It is found in the spindle pole. In terms of biological role, through the degradation of FBXW7, may act indirectly on the expression and downstream signaling of MTOR, JUN and MYC. May play also a role in cell proliferation through activation of the ERK1/ERK2 signaling cascade. May also be important for proper chromosome congression and alignment during mitosis through its interaction with KIF22. The sequence is that of Protein FAM83D from Bos taurus (Bovine).